The following is a 327-amino-acid chain: Annexin A8 (327 aa).

4 Annexin repeats span residues 21 to 92 (FNPD…ALMY), 93 to 164 (PPYS…CLLQ), 177 to 249 (GLVL…TVVK), and 253 to 324 (NVHS…NLVG). 4 residues coordinate Ca(2+): Met-266, Gly-268, Gly-270, and Asp-310.

The protein belongs to the annexin family.

Functionally, this protein is an anticoagulant protein that acts as an indirect inhibitor of the thromboplastin-specific complex, which is involved in the blood coagulation cascade. The polypeptide is Annexin A8 (Anxa8) (Mus musculus (Mouse)).